The chain runs to 527 residues: AAA ATPase forming ring-shaped complexes (527 aa).

Residues 1–18 (MVTMSSPTDSSPSNSFSD) show a composition bias toward low complexity. Residues 1 to 38 (MVTMSSPTDSSPSNSFSDFNREEQSRLSDEVRQLKRTN) are disordered. The segment covering 19-33 (FNREEQSRLSDEVRQ) has biased composition (basic and acidic residues). Residues 21–53 (REEQSRLSDEVRQLKRTNSDLGARNAKLAEMLK) are a coiled coil. An ATP-binding site is contributed by 257–262 (GCGKTL). The disordered stretch occupies residues 492 to 515 (DENQQSEDLPNTSNPDEWSRITGR). Positions 497–507 (SEDLPNTSNPD) are enriched in polar residues.

It belongs to the AAA ATPase family. As to quaternary structure, homohexamer. Assembles into a hexameric ring structure.

The sequence is that of AAA ATPase forming ring-shaped complexes from Corynebacterium glutamicum (strain R).